Reading from the N-terminus, the 118-residue chain is U16-barytoxin-Tl1c (118 aa).

Residues 1–16 (MKTIIVFLSFLVLVLA) form the signal peptide. Residues 17–76 (TKFGDANEGVNREQTKEVIQNEFRGDFLNEMAAMSLLQQLEAIESALLEKEADRNSRQKR) constitute a propeptide that is removed on maturation. Intrachain disulfides connect Cys77/Cys92, Cys84/Cys97, and Cys91/Cys112.

It belongs to the neurotoxin 14 (magi-1) family. 06 (ICK-Trit) subfamily. As to expression, expressed by the venom gland.

Its subcellular location is the secreted. Ion channel inhibitor. In Trittame loki (Brush-footed trapdoor spider), this protein is U16-barytoxin-Tl1c.